The following is a 194-amino-acid chain: Large ribosomal subunit protein uL10 (194 aa).

Residues 172 to 187 (EGGAAEAPAEAATEAP) are compositionally biased toward low complexity. A disordered region spans residues 172–194 (EGGAAEAPAEAATEAPAEAEAES).

The protein belongs to the universal ribosomal protein uL10 family. In terms of assembly, part of the ribosomal stalk of the 50S ribosomal subunit. The N-terminus interacts with L11 and the large rRNA to form the base of the stalk. The C-terminus forms an elongated spine to which L12 dimers bind in a sequential fashion forming a multimeric L10(L12)X complex.

Forms part of the ribosomal stalk, playing a central role in the interaction of the ribosome with GTP-bound translation factors. This is Large ribosomal subunit protein uL10 from Rhodococcus erythropolis (strain PR4 / NBRC 100887).